A 324-amino-acid chain; its full sequence is DNA-directed RNA polymerase subunit alpha (324 aa).

The tract at residues M1–S228 is alpha N-terminal domain (alpha-NTD). Residues R245–K324 form an alpha C-terminal domain (alpha-CTD) region.

Belongs to the RNA polymerase alpha chain family. Homodimer. The RNAP catalytic core consists of 2 alpha, 1 beta, 1 beta' and 1 omega subunit. When a sigma factor is associated with the core the holoenzyme is formed, which can initiate transcription.

The catalysed reaction is RNA(n) + a ribonucleoside 5'-triphosphate = RNA(n+1) + diphosphate. In terms of biological role, DNA-dependent RNA polymerase catalyzes the transcription of DNA into RNA using the four ribonucleoside triphosphates as substrates. The sequence is that of DNA-directed RNA polymerase subunit alpha from Caldicellulosiruptor saccharolyticus (strain ATCC 43494 / DSM 8903 / Tp8T 6331).